Consider the following 317-residue polypeptide: uncharacterized protein (317 aa).

The Cytoplasmic segment spans residues 1–13; sequence MKRVTGVFLTLLR. Residues 14-34 form a helical membrane-spanning segment; that stretch reads FSQFASSVLVMSLLAYAIHAY. At 35 to 49 the chain is on the extracellular side; that stretch reads GNRGNKKTNFTLATG. Residue Asn43 is glycosylated (N-linked (GlcNAc...) asparagine). A helical transmembrane segment spans residues 50–70; it reads VISVFYLIALGILCLALPTLI. A topological domain (cytoplasmic) is located at residue Tyr71. The chain crosses the membrane as a helical span at residues 72–92; that stretch reads IGMYFCAELIVCMLWLAAFVV. Residues 93–133 lie on the Extracellular side of the membrane; that stretch reads LAKAQGERSCSNTNADGLYYNPYSGQYTADSHRRACNSSQA. N-linked (GlcNAc...) asparagine glycosylation occurs at Asn129. Residues 134 to 154 form a helical membrane-spanning segment; the sequence is AIAFSGLCFVLFLISVILLGI. The Cytoplasmic portion of the chain corresponds to 155–317; that stretch reads NVLTPIRKRY…EPNRNVNQMP (163 aa). Residues 204 to 317 form a disordered region; sequence RTGDVEAGAG…EPNRNVNQMP (114 aa). Over residues 239 to 250 the composition is skewed to low complexity; sequence TTTTNTRYTTTT. Residues 256-282 show a composition bias toward polar residues; sequence RYTTNDRNPGSANVANSAVDQHAYSTD. The segment covering 284–295 has biased composition (basic and acidic residues); sequence SGDRSYQEKVTE. Positions 302-317 are enriched in polar residues; the sequence is MSGSTAEPNRNVNQMP.

The protein localises to the membrane. This is an uncharacterized protein from Saccharomyces cerevisiae (strain ATCC 204508 / S288c) (Baker's yeast).